A 97-amino-acid polypeptide reads, in one-letter code: Serine protease inhibitor Kazal-type 8 (97 aa).

An N-terminal signal peptide occupies residues 1–21 (MKGICSDAILVLATSMWMAFA). A Kazal-like domain is found at 36–96 (DKTIVECLKN…TKLYDGQCEN (61 aa)). Cystine bridges form between Cys-42/Cys-76, Cys-49/Cys-73, and Cys-62/Cys-94. An N-linked (GlcNAc...) asparagine glycan is attached at Asn-85.

The protein localises to the secreted. Probable serine protease inhibitor. In Homo sapiens (Human), this protein is Serine protease inhibitor Kazal-type 8 (SPINK8).